We begin with the raw amino-acid sequence, 336 residues long: Probable G-protein coupled receptor 160 (336 aa).

At 1 to 21 (MTALPSKNCSFQYQSHQAPRS) the chain is on the extracellular side. Residue Asn-8 is glycosylated (N-linked (GlcNAc...) asparagine). Residues 22–42 (LDATCLLLLIILGKVLLNVLI) form a helical membrane-spanning segment. The Cytoplasmic segment spans residues 43-56 (LRVKRKDTSWSFME). A helical transmembrane segment spans residues 57–77 (YFCFSLALVDLLLLVNISVLT). Over 78-95 (YFRDFVVLGIRFTNYHIC) the chain is Extracellular. A helical transmembrane segment spans residues 96–116 (LLTQIVSFAYGFLHYPVCSLA). The Cytoplasmic segment spans residues 117–136 (CIDYWCNLSRATKPSSRWQK). The helical transmembrane segment at 137–157 (LLYLLTVILTWISVLAYVLGD) threads the bilayer. Topologically, residues 158-187 (PAISASLKTHKTSVNQCPSYVSTQSHWLSL) are extracellular. The chain crosses the membrane as a helical span at residues 188-208 (SMLMILSVAFLISWQEVVALI). The Cytoplasmic segment spans residues 209–243 (QAIRIASYKNKAVLYFPFPPHTSYTVSPRAVLLPR). The chain crosses the membrane as a helical span at residues 244 to 264 (LIVCFLGTWFPFVALQVLILS). Residues 265–272 (LRVQIPAY) are Extracellular-facing. Residues 273-293 (IEMNVPWLYFVNSFLIAAVYW) form a helical membrane-spanning segment. Topologically, residues 294–336 (FNCHKLYWRDGMFPVDPFINWKCCFVPVHRLKQVERPMSIIIC) are cytoplasmic.

It belongs to the G-protein coupled receptor 1 family.

Its subcellular location is the cell membrane. Its function is as follows. Orphan receptor. This Rattus norvegicus (Rat) protein is Probable G-protein coupled receptor 160 (Gpr160).